Reading from the N-terminus, the 329-residue chain is DNA-directed RNA polymerase subunit alpha (329 aa).

The segment at 1–235 (MQGSVTEFLK…EQLDAFVDLR (235 aa)) is alpha N-terminal domain (alpha-NTD). The interval 249–329 (FDPILLRPVD…NWPPASIAED (81 aa)) is alpha C-terminal domain (alpha-CTD).

Belongs to the RNA polymerase alpha chain family. In terms of assembly, homodimer. The RNAP catalytic core consists of 2 alpha, 1 beta, 1 beta' and 1 omega subunit. When a sigma factor is associated with the core the holoenzyme is formed, which can initiate transcription.

It carries out the reaction RNA(n) + a ribonucleoside 5'-triphosphate = RNA(n+1) + diphosphate. In terms of biological role, DNA-dependent RNA polymerase catalyzes the transcription of DNA into RNA using the four ribonucleoside triphosphates as substrates. This chain is DNA-directed RNA polymerase subunit alpha, found in Actinobacillus succinogenes (strain ATCC 55618 / DSM 22257 / CCUG 43843 / 130Z).